The chain runs to 271 residues: 2-aminophenol 1,6-dioxygenase alpha subunit (271 aa).

Belongs to the LigB/MhpB extradiol dioxygenase family. In terms of assembly, heterotetramer of 2 alpha and 2 beta subunits.

Component of the 2-aminophenol 1,6-dioxygenase complex that catalyzes the ring fission of 2-aminophenol to produce 2-aminomuconic 6-semialdehyde. AmnA seems to have a role in the stability of the complex. The polypeptide is 2-aminophenol 1,6-dioxygenase alpha subunit (amnA) (Pseudomonas sp).